Here is a 637-residue protein sequence, read N- to C-terminus: Chaperone protein HtpG (637 aa).

The a; substrate-binding stretch occupies residues 1-348; sequence MAEAGQMEKH…SNDLPLNVSR (348 aa). A b region spans residues 349 to 565; that stretch reads EILQDNKITR…DNDMSTQMAK (217 aa). Residues 566–637 form a c region; the sequence is LMEAAGQAVP…TRLNKLMLNA (72 aa).

It belongs to the heat shock protein 90 family. In terms of assembly, homodimer.

The protein localises to the cytoplasm. Molecular chaperone. Has ATPase activity. The sequence is that of Chaperone protein HtpG from Idiomarina loihiensis (strain ATCC BAA-735 / DSM 15497 / L2-TR).